Consider the following 249-residue polypeptide: Diaminopimelate epimerase (249 aa).

Positions 11 and 60 each coordinate substrate. Residue cysteine 69 is the Proton donor of the active site. Residues 70-71, asparagine 164, and 182-183 contribute to the substrate site; these read GN and ER. Cysteine 192 acts as the Proton acceptor in catalysis. 193 to 194 contributes to the substrate binding site; the sequence is GT.

The protein belongs to the diaminopimelate epimerase family. Homodimer.

It localises to the cytoplasm. The enzyme catalyses (2S,6S)-2,6-diaminopimelate = meso-2,6-diaminopimelate. It functions in the pathway amino-acid biosynthesis; L-lysine biosynthesis via DAP pathway; DL-2,6-diaminopimelate from LL-2,6-diaminopimelate: step 1/1. In terms of biological role, catalyzes the stereoinversion of LL-2,6-diaminopimelate (L,L-DAP) to meso-diaminopimelate (meso-DAP), a precursor of L-lysine and an essential component of the bacterial peptidoglycan. In Campylobacter jejuni subsp. jejuni serotype O:6 (strain 81116 / NCTC 11828), this protein is Diaminopimelate epimerase.